The sequence spans 337 residues: Viral cathepsin (337 aa).

A signal peptide spans 1 to 18 (MYLIYYYTIIAVATASIA). Residues 19–126 (NEKIFYDIDS…VTVAGPSART (108 aa)) constitute a propeptide, activation peptide. Cystine bridges form between Cys-147–Cys-188, Cys-181–Cys-221, and Cys-276–Cys-324. Residue Cys-150 is part of the active site. Catalysis depends on residues His-283 and Asn-303.

Belongs to the peptidase C1 family. Synthesized as an inactive proenzyme and activated by proteolytic removal of the inhibitory propeptide.

The enzyme catalyses Endopeptidase of broad specificity, hydrolyzing substrates of both cathepsin L and cathepsin B.. Functionally, cysteine protease that plays an essential role in host liquefaction to facilitate horizontal transmission of the virus. May participate in the degradation of foreign protein expressed by the baculovirus system. This chain is Viral cathepsin (VCATH), found in Spodoptera litura multicapsid nucleopolyhedrovirus (SpltMNPV).